A 286-amino-acid chain; its full sequence is Probable tRNA(His) guanylyltransferase (286 aa).

The Mg(2+) site is built by Asp-29, Gly-30, and Asp-76. GTP is bound by residues 29–34 (DGKKFH) and 75–76 (SD).

This sequence belongs to the tRNA(His) guanylyltransferase family. It depends on Mg(2+) as a cofactor.

The catalysed reaction is a 5'-end ribonucleotide-tRNA(His) + GTP + ATP + H2O = a 5'-end phospho-guanosine-ribonucleotide-tRNA(His) + AMP + 2 diphosphate + H(+). Its function is as follows. Adds a GMP to the 5'-end of tRNA(His) after transcription and RNase P cleavage. The protein is Probable tRNA(His) guanylyltransferase of Drosophila melanogaster (Fruit fly).